We begin with the raw amino-acid sequence, 497 residues long: Probable cytosol aminopeptidase (497 aa).

Mn(2+) contacts are provided by Lys263 and Asp268. Lys275 is a catalytic residue. The Mn(2+) site is built by Asp286, Asp345, and Glu347. Arg349 is a catalytic residue.

It belongs to the peptidase M17 family. Mn(2+) is required as a cofactor.

It localises to the cytoplasm. The enzyme catalyses Release of an N-terminal amino acid, Xaa-|-Yaa-, in which Xaa is preferably Leu, but may be other amino acids including Pro although not Arg or Lys, and Yaa may be Pro. Amino acid amides and methyl esters are also readily hydrolyzed, but rates on arylamides are exceedingly low.. The catalysed reaction is Release of an N-terminal amino acid, preferentially leucine, but not glutamic or aspartic acids.. In terms of biological role, presumably involved in the processing and regular turnover of intracellular proteins. Catalyzes the removal of unsubstituted N-terminal amino acids from various peptides. This Sinorhizobium fredii (strain NBRC 101917 / NGR234) protein is Probable cytosol aminopeptidase.